A 282-amino-acid chain; its full sequence is Gap junction Cx32.7 protein (282 aa).

The Cytoplasmic portion of the chain corresponds to 2 to 13 (GEWDLLGRLLDK). Residues 14 to 36 (VQSHSTVIGKVWLTVLFVFRILV) form a helical membrane-spanning segment. At 37–76 (LRTGADRVWGDEQSDFVCNTQQPGCENVCYDLAFPISHVR) the chain is on the extracellular side. Residues 77-99 (FWFLQIIAVATPKLLYLGHVLHV) traverse the membrane as a helical segment. At 100-148 (IHAEKKMKERMKKQAELDDQTNLFLRKAYKVPKYTKSSGKISIRGRLLR) the chain is on the cytoplasmic side. A helical membrane pass occupies residues 149–171 (SYVYHLVAKIILEVLFIVGQYFL). Over 172 to 203 (YGFTLDTRYVCTRFPCPHKVDCFLSRPTEKSV) the chain is Extracellular. Residues 204-226 (IIWFMLVAAFVSLFLSLVELFYL) form a helical membrane-spanning segment. At 227 to 282 (CVKAAKECMARRQDYTVTPVTPPLLARKSFKSHKEVFQNCVNEPASPENNMEEVHI) the chain is on the cytoplasmic side.

This sequence belongs to the connexin family. Alpha-type (group II) subfamily. As to quaternary structure, a connexon is composed of a hexamer of connexins. As to expression, expressed equally in incompetent and competent ovaries.

Its subcellular location is the cell membrane. The protein resides in the cell junction. It is found in the gap junction. In terms of biological role, one gap junction consists of a cluster of closely packed pairs of transmembrane channels, the connexons, through which materials of low MW diffuse from one cell to a neighboring cell. This is Gap junction Cx32.7 protein from Micropogonias undulatus (Atlantic croaker).